The primary structure comprises 269 residues: MMSRRKFLLLTGAAAAGAILTPQISAKTQFIESPEEVREKRRWAMAVDVERCTQCMEELIAKTGDEKIKPPCVVACDKENNVPEFEEERFDPQWMRIAKLKLDKPEVNPKEYYIPLLCNHCEHPPCVQVCLTKASFKRPDGIVEIDMHRCIGCRYCMIACPYGARCFNFIDPREGLKEVNPNVQMRTEGVVEKCTFCVHRIDEAVKKGEEPIPACVEACHKYGKGALVFGNIKDPNSEISKILRENIVVQLRANLGTDPHVFYAKLGGE.

The segment at residues 1-26 is a signal peptide (tat-type signal); it reads MMSRRKFLLLTGAAAAGAILTPQISA. The [4Fe-4S] cluster site is built by C52, C55, C72, C76, C118, C121, C126, C130, C150, C153, C156, C160, C194, C197, C215, and C219. A 4Fe-4S ferredoxin-type domain is found at 141–170; it reads GIVEIDMHRCIGCRYCMIACPYGARCFNFI.

In terms of assembly, consists of five subunits: an integral membrane subunit, a cytochrome b-like subunit, a cytochrome c subunit and two iron-sulfur subunits. Requires [4Fe-4S] cluster as cofactor. In terms of processing, predicted to be exported by the Tat system. The position of the signal peptide cleavage has been experimentally proven.

The protein localises to the cell membrane. In terms of biological role, has menaquinol-oxidizing activity. HmeA, HmeB and HmeE subunits may together catalyze electron transfer from menaquinol to cytochrome c. In Archaeoglobus fulgidus (strain ATCC 49558 / DSM 4304 / JCM 9628 / NBRC 100126 / VC-16), this protein is Hdr-like menaquinol oxidoreductase iron-sulfur subunit 1 (hmeA).